The chain runs to 148 residues: MKLDLKILDARMRDQLPAYATTGSAGLDLRACLDEALTLKPGETALVPTGLAIHVGDAGYAALILPRSGLGHKHGIVLGNLVGLIDSDYQGQLMISTWNRGETTFVLNPMERLAQLVIVPVVQAEFNIVDDFETSDRGAGGFGSTGKH.

Residues 67-69, N80, 84-86, and M94 each bind substrate; these read RSG and LID.

The protein belongs to the dUTPase family. Mg(2+) serves as cofactor.

It carries out the reaction dUTP + H2O = dUMP + diphosphate + H(+). The protein operates within pyrimidine metabolism; dUMP biosynthesis; dUMP from dCTP (dUTP route): step 2/2. Its function is as follows. This enzyme is involved in nucleotide metabolism: it produces dUMP, the immediate precursor of thymidine nucleotides and it decreases the intracellular concentration of dUTP so that uracil cannot be incorporated into DNA. In Paraburkholderia phytofirmans (strain DSM 17436 / LMG 22146 / PsJN) (Burkholderia phytofirmans), this protein is Deoxyuridine 5'-triphosphate nucleotidohydrolase.